Here is a 327-residue protein sequence, read N- to C-terminus: Ribosomal RNA small subunit methyltransferase H (327 aa).

Residues 36–38 (GGH), Asp61, Phe88, Asp114, and Gln121 contribute to the S-adenosyl-L-methionine site.

Belongs to the methyltransferase superfamily. RsmH family.

The protein localises to the cytoplasm. The catalysed reaction is cytidine(1402) in 16S rRNA + S-adenosyl-L-methionine = N(4)-methylcytidine(1402) in 16S rRNA + S-adenosyl-L-homocysteine + H(+). Functionally, specifically methylates the N4 position of cytidine in position 1402 (C1402) of 16S rRNA. The protein is Ribosomal RNA small subunit methyltransferase H of Chlorobium phaeovibrioides (strain DSM 265 / 1930) (Prosthecochloris vibrioformis (strain DSM 265)).